The sequence spans 122 residues: Large ribosomal subunit protein uL14 (122 aa).

The protein belongs to the universal ribosomal protein uL14 family. Part of the 50S ribosomal subunit. Forms a cluster with proteins L3 and L19. In the 70S ribosome, L14 and L19 interact and together make contacts with the 16S rRNA in bridges B5 and B8.

Binds to 23S rRNA. Forms part of two intersubunit bridges in the 70S ribosome. The chain is Large ribosomal subunit protein uL14 from Alkalilimnicola ehrlichii (strain ATCC BAA-1101 / DSM 17681 / MLHE-1).